The sequence spans 657 residues: tRNA 5-methylaminomethyl-2-thiouridine biosynthesis bifunctional protein MnmC (657 aa).

The tRNA (mnm(5)s(2)U34)-methyltransferase stretch occupies residues 1-233 (MPRALEPAEP…KWQMTVASFR (233 aa)). Positions 257-657 (IGAGLAGCAV…LRALRHGHTG (401 aa)) are FAD-dependent cmnm(5)s(2)U34 oxidoreductase.

The protein in the N-terminal section; belongs to the methyltransferase superfamily. tRNA (mnm(5)s(2)U34)-methyltransferase family. In the C-terminal section; belongs to the DAO family. FAD serves as cofactor.

Its subcellular location is the cytoplasm. The enzyme catalyses 5-aminomethyl-2-thiouridine(34) in tRNA + S-adenosyl-L-methionine = 5-methylaminomethyl-2-thiouridine(34) in tRNA + S-adenosyl-L-homocysteine + H(+). In terms of biological role, catalyzes the last two steps in the biosynthesis of 5-methylaminomethyl-2-thiouridine (mnm(5)s(2)U) at the wobble position (U34) in tRNA. Catalyzes the FAD-dependent demodification of cmnm(5)s(2)U34 to nm(5)s(2)U34, followed by the transfer of a methyl group from S-adenosyl-L-methionine to nm(5)s(2)U34, to form mnm(5)s(2)U34. The protein is tRNA 5-methylaminomethyl-2-thiouridine biosynthesis bifunctional protein MnmC of Cupriavidus necator (strain ATCC 17699 / DSM 428 / KCTC 22496 / NCIMB 10442 / H16 / Stanier 337) (Ralstonia eutropha).